We begin with the raw amino-acid sequence, 201 residues long: MAMSILKLRNLSALRSAANSARIGVSSRGFSKLAEGTDITSAAPGVSLQKARSWDEGVSSKFSTTPLSDIFKGKKVVIFGLPGAYTGVCSQQHVPSYKSHIDKFKAKGIDSVICVSVNDPFAINGWAEKLGAKDAIEFYGDFDGKFHKSLGLDKDLSAALLGPRSERWSAYVEDGKVKAVNVEEAPSDFKVTGAEVILGQI.

Residues Met1–Phe30 constitute a mitochondrion transit peptide. Thr37 carries the post-translational modification Phosphothreonine. Residues Thr37 to Ile201 enclose the Thioredoxin domain. Cys89 acts as the Cysteine sulfenic acid (-SOH) intermediate in catalysis. Residue Ser149 is modified to Phosphoserine.

The protein belongs to the peroxiredoxin family. Prx5 subfamily. In terms of assembly, monomer. Expressed in the whole plant.

It localises to the mitochondrion matrix. The catalysed reaction is [glutaredoxin]-dithiol + a hydroperoxide = [glutaredoxin]-disulfide + an alcohol + H2O. Functionally, thiol-specific peroxidase that catalyzes the reduction of hydrogen peroxide and organic hydroperoxides to water and alcohols, respectively. Plays a role in cell protection against oxidative stress by detoxifying peroxides. Reduces preferentially hydrogen peroxide rather than alkyl peroxides. May be involved in mitochondrial redox homeostasis. The sequence is that of Peroxiredoxin-2F, mitochondrial (PRXIIF) from Arabidopsis thaliana (Mouse-ear cress).